We begin with the raw amino-acid sequence, 324 residues long: uncharacterized protein (324 aa).

The protein to the C-terminal of para-aminobenzoate synthase component I.

This is an uncharacterized protein from Pasteurella multocida (strain Pm70).